A 175-amino-acid polypeptide reads, in one-letter code: Co-chaperone protein HscB homolog (175 aa).

Residues 7-79 (SHFELFHLPA…LKRATYLLHL (73 aa)) form the J domain.

Belongs to the HscB family. Interacts with HscA and stimulates its ATPase activity.

Co-chaperone involved in the maturation of iron-sulfur cluster-containing proteins. Seems to help targeting proteins to be folded toward HscA. The chain is Co-chaperone protein HscB homolog from Burkholderia thailandensis (strain ATCC 700388 / DSM 13276 / CCUG 48851 / CIP 106301 / E264).